A 481-amino-acid chain; its full sequence is UDP-glycosyltransferase 88F3 (481 aa).

Residues serine 288, 357–358, 375–383, and 397–400 each bind UDP-alpha-D-glucose; these read WA, HCGWNSVLE, and YAEQ.

Belongs to the UDP-glycosyltransferase family.

Functionally, glycosyltransferase that may possess chalcone and dihydrochalcone 2'-O-glucosyltransferase activity. The sequence is that of UDP-glycosyltransferase 88F3 from Pyrus communis (Pear).